Consider the following 282-residue polypeptide: Energy-coupling factor transporter ATP-binding protein EcfA2 (282 aa).

Residues 1–234 enclose the ABC transporter domain; sequence MKGSPFEKVA…ADELVALGLD (234 aa). 28–35 lines the ATP pocket; sequence GHTGSGKS.

The protein belongs to the ABC transporter superfamily. Energy-coupling factor EcfA family. As to quaternary structure, forms a stable energy-coupling factor (ECF) transporter complex composed of 2 membrane-embedded substrate-binding proteins (S component), 2 ATP-binding proteins (A component) and 2 transmembrane proteins (T component).

The protein localises to the cell membrane. Functionally, ATP-binding (A) component of a common energy-coupling factor (ECF) ABC-transporter complex. Unlike classic ABC transporters this ECF transporter provides the energy necessary to transport a number of different substrates. The sequence is that of Energy-coupling factor transporter ATP-binding protein EcfA2 from Halalkalibacterium halodurans (strain ATCC BAA-125 / DSM 18197 / FERM 7344 / JCM 9153 / C-125) (Bacillus halodurans).